A 228-amino-acid polypeptide reads, in one-letter code: MRQDIVIRGTTRTGLLLLLPDEGEFSAVLERLAERLASSGRFFVGGRVQVHVGNRRLSPEDREALEQTLQRSGMVLLSVKEGGDPLAEVQAPEAGAPSAPPPPAGNTLVVTKTVRSGQEIRHDGDVIILGDVNPGAVVVATGHIVVMGALRGVAHAGCTGNRTAIVAATKLRPTQLRIAEVIGRAPDGDAPQSYPEVARIRGDLIVVEASAEKRQVSALEAVGAKEDR.

The protein belongs to the MinC family. As to quaternary structure, interacts with MinD and FtsZ.

In terms of biological role, cell division inhibitor that blocks the formation of polar Z ring septums. Rapidly oscillates between the poles of the cell to destabilize FtsZ filaments that have formed before they mature into polar Z rings. Prevents FtsZ polymerization. The chain is Probable septum site-determining protein MinC from Symbiobacterium thermophilum (strain DSM 24528 / JCM 14929 / IAM 14863 / T).